The following is a 409-amino-acid chain: Peptidase T (409 aa).

His-78 contacts Zn(2+). The active site involves Asp-80. Asp-140 serves as a coordination point for Zn(2+). Glu-173 acts as the Proton acceptor in catalysis. The Zn(2+) site is built by Glu-174, Asp-196, and His-379.

Belongs to the peptidase M20B family. It depends on Zn(2+) as a cofactor.

It is found in the cytoplasm. It catalyses the reaction Release of the N-terminal residue from a tripeptide.. In terms of biological role, cleaves the N-terminal amino acid of tripeptides. The sequence is that of Peptidase T from Salmonella heidelberg (strain SL476).